A 128-amino-acid chain; its full sequence is Flagellar basal body rod protein FlgB (128 aa).

It belongs to the flagella basal body rod proteins family. In terms of assembly, the basal body constitutes a major portion of the flagellar organelle and consists of a number of rings mounted on a central rod. In Gram-negative bacteria, at least four rings, L, P, S and M are present, whereas Gram-positive bacteria lack the L and P rings. The rod consists of about 26 subunits of FlgG in the distal portion, and FlgB, FlgC and FlgF build up the proximal portion of the rod with about 6 subunits each. Rod assembly occurs by export via the flagellum-specific pathway of its constituent proteins and by their incorporation into the rod structure in the probable order of FlgB, FlgC, FlgF and FlgG. Another protein, FliE, also assembles onto the stable rod structure.

It localises to the bacterial flagellum basal body. Functionally, structural component of flagellum, the bacterial motility apparatus. Part of the rod structure of flagellar basal body. This is Flagellar basal body rod protein FlgB from Cereibacter sphaeroides (strain ATCC 17029 / ATH 2.4.9) (Rhodobacter sphaeroides).